The following is a 204-amino-acid chain: RNA-free ribonuclease P (204 aa).

The protein belongs to the HARP family.

The catalysed reaction is Endonucleolytic cleavage of RNA, removing 5'-extranucleotides from tRNA precursor.. RNA-free RNase P that catalyzes the removal of the 5'-leader sequence from pre-tRNA to produce the mature 5'-terminus. The chain is RNA-free ribonuclease P from Pyrococcus abyssi (strain GE5 / Orsay).